Consider the following 132-residue polypeptide: Auxin-responsive protein SAUR72 (132 aa).

The segment at 22 to 54 (SDSQRPSRRSESFLRSSVTRRSKKQTSSVPEGH) is disordered. The segment covering 23-33 (DSQRPSRRSES) has biased composition (basic and acidic residues).

Belongs to the ARG7 family. As to quaternary structure, interacts with and inhibits PP2C-D subfamily of type 2C phosphatases such as PP2C67/PP2C-D1. In terms of tissue distribution, highly expressed in the steles of roots and hypocotyls.

The protein localises to the cytoplasm. Its function is as follows. Provide a mechanistic link between auxin and plasma membrane H(+)-ATPases (PM H(+)-ATPases, e.g. AHA1 and AHA2), and triggers PM H(+)-ATPases activity by promoting phosphorylation of their C-terminal autoinhibitory domain as a result of PP2C-D subfamily of type 2C phosphatases inhibition, thus leading to the acidification of the apoplast and the facilitation of solutes and water uptake to drive cell expansion. Plays a role in the regulation of cell expansion, root meristem patterning and auxin transport. In Arabidopsis thaliana (Mouse-ear cress), this protein is Auxin-responsive protein SAUR72.